The primary structure comprises 1102 residues: Coiled-coil domain-containing protein AGAP005037 (1102 aa).

Over residues 1–11 the composition is skewed to basic and acidic residues; sequence MLIRWKSKDKS. 2 disordered regions span residues 1-69 and 295-318; these read MLIR…HTLG and HKSKQPTKTPYYVGTTQTLPRGMY. Positions 12-21 are enriched in low complexity; that stretch reads SSSTSSSSST. Residues 50–65 are compositionally biased toward basic and acidic residues; sequence IDDRRRSARSREDPRR. Residues 405-430 adopt a coiled-coil conformation; that stretch reads HRIRVEHMERQLANLTGLVQKALTQN. Disordered regions lie at residues 450–475 and 489–539; these read RNAEATGDGTVCTREKPPKLGKSTCH and DIQG…PLVM. Coiled-coil stretches lie at residues 554–579 and 614–654; these read EVYNQLRGLQKKAMDLRTEVRTLRRL and DKER…EVIN. Disordered stretches follow at residues 745 to 774, 832 to 958, and 1031 to 1087; these read LPIPDTAGTDETIKPPETHNNVNKPIPSPR, TKIS…CSDN, and LCGG…TLPP. Polar residues predominate over residues 832 to 849; that stretch reads TKISQSQLYPSEPVSSNV. Residues 867 to 881 show a composition bias toward pro residues; sequence PPQPTRPTTGKPPVP. Residues 904 to 918 are compositionally biased toward low complexity; sequence TSSRSPLASPTSPHV. The span at 936–958 shows a compositional bias: polar residues; sequence DCEQQQRTSEGTDSGSESVCSDN.

In Anopheles gambiae (African malaria mosquito), this protein is Coiled-coil domain-containing protein AGAP005037.